Consider the following 578-residue polypeptide: 2-succinyl-5-enolpyruvyl-6-hydroxy-3-cyclohexene-1-carboxylate synthase (578 aa).

The tract at residues 186 to 208 (LPAAGGEHHPAEPRSTPWDGPVP) is disordered.

This sequence belongs to the TPP enzyme family. MenD subfamily. Homodimer. Mg(2+) is required as a cofactor. It depends on Mn(2+) as a cofactor. The cofactor is thiamine diphosphate.

It carries out the reaction isochorismate + 2-oxoglutarate + H(+) = 5-enolpyruvoyl-6-hydroxy-2-succinyl-cyclohex-3-ene-1-carboxylate + CO2. The protein operates within quinol/quinone metabolism; 1,4-dihydroxy-2-naphthoate biosynthesis; 1,4-dihydroxy-2-naphthoate from chorismate: step 2/7. It participates in cofactor biosynthesis; phylloquinone biosynthesis. Functionally, catalyzes the thiamine diphosphate-dependent decarboxylation of 2-oxoglutarate and the subsequent addition of the resulting succinic semialdehyde-thiamine pyrophosphate anion to isochorismate to yield 2-succinyl-5-enolpyruvyl-6-hydroxy-3-cyclohexene-1-carboxylate (SEPHCHC). The polypeptide is 2-succinyl-5-enolpyruvyl-6-hydroxy-3-cyclohexene-1-carboxylate synthase (Synechococcus sp. (strain WH7803)).